Consider the following 175-residue polypeptide: Inorganic pyrophosphatase (175 aa).

Lys-30, Arg-44, and Tyr-56 together coordinate substrate. 3 residues coordinate Mg(2+): Asp-66, Asp-71, and Asp-103. Substrate is bound at residue Tyr-142.

The protein belongs to the PPase family. In terms of assembly, homohexamer. Mg(2+) is required as a cofactor.

The protein localises to the cytoplasm. The enzyme catalyses diphosphate + H2O = 2 phosphate + H(+). Catalyzes the hydrolysis of inorganic pyrophosphate (PPi) forming two phosphate ions. In Buchnera aphidicola subsp. Baizongia pistaciae (strain Bp), this protein is Inorganic pyrophosphatase.